The primary structure comprises 36 residues: Potassium channel toxin alpha-KTx 2.7 (36 aa).

3 cysteine pairs are disulfide-bonded: Cys-7–Cys-29, Cys-13–Cys-34, and Cys-17–Cys-36.

The protein belongs to the short scorpion toxin superfamily. Potassium channel inhibitor family. Alpha-KTx 02 subfamily. In terms of tissue distribution, expressed by the venom gland.

The protein resides in the secreted. In terms of biological role, inhibitor of voltage-gated potassium channels (Kv). This protein is capable of displacing the binding of radio-labeled noxiustoxin (AC P08815) to rat brain synaptosomes with high affinity (about 100 pM). It is also capable of inhibiting transient potassium-currents (resembling I(A)-type currents), in cultured rat cerebellar granule cells. About 50% of the peak currents are reduced by application of a 1.5 uM solution of this toxin. Is lethal to mice (when less than 100 ug are injected). In Centruroides limpidus (Mexican scorpion), this protein is Potassium channel toxin alpha-KTx 2.7.